The primary structure comprises 448 residues: Tryptophan--tRNA ligase (448 aa).

ATP is bound by residues 10-12 (TPT) and 18-19 (GN). The 'HIGH' region signature appears at 11–19 (PTGTPHLGN). Residue D143 coordinates L-tryptophan. ATP-binding positions include 155 to 157 (GRD), L197, and 204 to 208 (KMSKS). A 'KMSKS' region motif is present at residues 204-208 (KMSKS).

The protein belongs to the class-I aminoacyl-tRNA synthetase family. As to quaternary structure, homodimer.

It is found in the cytoplasm. The catalysed reaction is tRNA(Trp) + L-tryptophan + ATP = L-tryptophyl-tRNA(Trp) + AMP + diphosphate + H(+). Functionally, catalyzes the attachment of tryptophan to tRNA(Trp). The sequence is that of Tryptophan--tRNA ligase from Pseudomonas aeruginosa (strain ATCC 15692 / DSM 22644 / CIP 104116 / JCM 14847 / LMG 12228 / 1C / PRS 101 / PAO1).